A 115-amino-acid polypeptide reads, in one-letter code: ComG operon protein 5 (115 aa).

The propeptide at 1-7 is leader sequence; it reads MWRENKG. Phe-8 bears the N-methylphenylalanine mark. Residues 13–31 form a helical membrane-spanning segment; that stretch reads TMSALSLWLFVLLTVVPLW.

Post-translationally, processing of ComGE in competent cells requires ComC.

It is found in the cell membrane. Its subcellular location is the cell surface. Its function is as follows. Required for transformation and DNA binding. The sequence is that of ComG operon protein 5 (comGE) from Bacillus subtilis (strain 168).